The following is a 173-amino-acid chain: Small ribosomal subunit protein uS10m (173 aa).

It belongs to the universal ribosomal protein uS10 family. In terms of assembly, component of the mitochondrial ribosome small subunit (28S) which comprises a 12S rRNA and about 30 distinct proteins.

It is found in the mitochondrion. The chain is Small ribosomal subunit protein uS10m (mRpS10) from Drosophila melanogaster (Fruit fly).